Consider the following 140-residue polypeptide: CDGSH iron-sulfur domain-containing protein 2 homolog (140 aa).

Topologically, residues methionine 1 to aspartate 35 are lumenal. Residues alanine 36–glutamine 59 traverse the membrane as a helical segment. Residues proline 60–asparagine 140 are Cytoplasmic-facing. The [2Fe-2S] cluster site is built by cysteine 104, cysteine 106, cysteine 115, and histidine 119.

It belongs to the CISD protein family. CISD2 subfamily. Requires [2Fe-2S] cluster as cofactor.

Its subcellular location is the endoplasmic reticulum membrane. The polypeptide is CDGSH iron-sulfur domain-containing protein 2 homolog (Trichoplax adhaerens (Trichoplax reptans)).